A 102-amino-acid chain; its full sequence is Small ribosomal subunit protein uS10 (102 aa).

The protein belongs to the universal ribosomal protein uS10 family. As to quaternary structure, part of the 30S ribosomal subunit.

In terms of biological role, involved in the binding of tRNA to the ribosomes. This Chlorobium phaeobacteroides (strain BS1) protein is Small ribosomal subunit protein uS10.